The primary structure comprises 275 residues: Nitrogenase iron protein 3 (275 aa).

9-16 is an ATP binding site; that stretch reads GKGGIGKS. Position 97 (C97) interacts with [4Fe-4S] cluster. R100 bears the ADP-ribosylarginine; by dinitrogenase reductase ADP-ribosyltransferase mark. Residue C132 coordinates [4Fe-4S] cluster.

The protein belongs to the NifH/BchL/ChlL family. In terms of assembly, homodimer. [4Fe-4S] cluster serves as cofactor. In terms of processing, the reversible ADP-ribosylation of Arg-100 inactivates the nitrogenase reductase and regulates nitrogenase activity.

It carries out the reaction N2 + 8 reduced [2Fe-2S]-[ferredoxin] + 16 ATP + 16 H2O = H2 + 8 oxidized [2Fe-2S]-[ferredoxin] + 2 NH4(+) + 16 ADP + 16 phosphate + 6 H(+). Its function is as follows. The key enzymatic reactions in nitrogen fixation are catalyzed by the nitrogenase complex, which has 2 components: the iron protein and the molybdenum-iron protein. This is Nitrogenase iron protein 3 (nifH3) from Clostridium pasteurianum.